The sequence spans 1662 residues: Cortactin-binding protein 2 (1662 aa).

Disordered regions lie at residues 1 to 23 (MATD…AGAA), 203 to 222 (KKKT…RSTE), 361 to 440 (SHSD…LHPG), 454 to 479 (GNAN…PTSR), and 498 to 618 (RFTS…PSID). Residues 119-276 (KKMQERMSAQ…EQLKRGSDSK (158 aa)) are a coiled coil. Residues 386–396 (PSTDSTPDPTS) are compositionally biased toward low complexity. Positions 411–422 (QTPGIAPQNSQA) are enriched in polar residues. Arg498 is subject to Asymmetric dimethylarginine. Residues 583–597 (TVASPPSSLPQGNRV) are compositionally biased toward polar residues. ANK repeat units lie at residues 709-739 (GRPT…DINY), 743-772 (DGHS…QINA), 776-805 (NGFT…NINH), 809-838 (GGQT…NRSV), 842-871 (DGWT…PACG), and 912-942 (EGWT…EPER). The disordered stretch occupies residues 1450–1474 (GESGAWRKVNTSPRRKSGRFSLPTW). Phosphoserine is present on Ser1524. Disordered stretches follow at residues 1580–1602 (SQKE…KSKT) and 1618–1662 (SKVT…KPNK). The span at 1582–1599 (KEVSPLSSHQTTECSNSK) shows a compositional bias: polar residues. The span at 1624–1638 (SQNTKRSSSSSNTRQ) shows a compositional bias: low complexity. Positions 1639–1648 (IEINNNSKEN) are enriched in polar residues. Residues 1649–1662 (WNLHKNEHLDKPNK) show a composition bias toward basic and acidic residues.

As to quaternary structure, interacts with CTTN/cortactin SH3 domain. Interacts with STRN, STRN4/zinedin and MOB4/phocein; this interactions mediate the association with the STRIPAK core complex and may regulate dendritic spine distribution of the STRIPAK complex in hippocampal neurons. Activation of glutamate receptors weakens the interaction with STRN and STRN4.

It localises to the cytoplasm. It is found in the cell cortex. The protein resides in the cell projection. The protein localises to the dendritic spine. Functionally, regulates the dendritic spine distribution of CTTN/cortactin in hippocampal neurons, and thus controls dendritic spinogenesis and dendritic spine maintenance. Associates with the striatin-interacting phosphatase and kinase (STRIPAK) core complex to regulate dendritic spine distribution of the STRIPAK complex in hippocampal neurons. The protein is Cortactin-binding protein 2 (CTTNBP2) of Chlorocebus aethiops (Green monkey).